A 458-amino-acid polypeptide reads, in one-letter code: Argininosuccinate lyase (458 aa).

This sequence belongs to the lyase 1 family. Argininosuccinate lyase subfamily.

It is found in the cytoplasm. It carries out the reaction 2-(N(omega)-L-arginino)succinate = fumarate + L-arginine. The protein operates within amino-acid biosynthesis; L-arginine biosynthesis; L-arginine from L-ornithine and carbamoyl phosphate: step 3/3. The polypeptide is Argininosuccinate lyase (Geobacter sulfurreducens (strain ATCC 51573 / DSM 12127 / PCA)).